The chain runs to 255 residues: Thiazole synthase (255 aa).

Catalysis depends on Lys-95, which acts as the Schiff-base intermediate with DXP. Residues Gly-156, 182-183 (AG), and 204-205 (NT) contribute to the 1-deoxy-D-xylulose 5-phosphate site.

Belongs to the ThiG family. As to quaternary structure, homotetramer. Forms heterodimers with either ThiH or ThiS.

Its subcellular location is the cytoplasm. The enzyme catalyses [ThiS sulfur-carrier protein]-C-terminal-Gly-aminoethanethioate + 2-iminoacetate + 1-deoxy-D-xylulose 5-phosphate = [ThiS sulfur-carrier protein]-C-terminal Gly-Gly + 2-[(2R,5Z)-2-carboxy-4-methylthiazol-5(2H)-ylidene]ethyl phosphate + 2 H2O + H(+). It functions in the pathway cofactor biosynthesis; thiamine diphosphate biosynthesis. Functionally, catalyzes the rearrangement of 1-deoxy-D-xylulose 5-phosphate (DXP) to produce the thiazole phosphate moiety of thiamine. Sulfur is provided by the thiocarboxylate moiety of the carrier protein ThiS. In vitro, sulfur can be provided by H(2)S. This is Thiazole synthase from Photorhabdus laumondii subsp. laumondii (strain DSM 15139 / CIP 105565 / TT01) (Photorhabdus luminescens subsp. laumondii).